The following is a 507-amino-acid chain: ATP synthase subunit alpha, chloroplastic (507 aa).

170-177 contacts ATP; the sequence is GDRQTGKT.

It belongs to the ATPase alpha/beta chains family. As to quaternary structure, F-type ATPases have 2 components, CF(1) - the catalytic core - and CF(0) - the membrane proton channel. CF(1) has five subunits: alpha(3), beta(3), gamma(1), delta(1), epsilon(1). CF(0) has four main subunits: a, b, b' and c.

The protein resides in the plastid. It is found in the chloroplast thylakoid membrane. It catalyses the reaction ATP + H2O + 4 H(+)(in) = ADP + phosphate + 5 H(+)(out). Its function is as follows. Produces ATP from ADP in the presence of a proton gradient across the membrane. The alpha chain is a regulatory subunit. This chain is ATP synthase subunit alpha, chloroplastic, found in Vitis vinifera (Grape).